The chain runs to 103 residues: MVLIKINNIDFTLVDKEKLSSIVEGKAIPLIFIRKRGIKLGNLCLLGEFNQEISFFKGKNGKTLLPDMSDLYLMDGFNKQLSRDSFSNNYEKLYYILLVQMFL.

This is an uncharacterized protein from Dictyostelium discoideum (Social amoeba).